The primary structure comprises 299 residues: Nucleotide-binding protein AFE_3021 (299 aa).

11–18 (GLSGSGKS) lines the ATP pocket. GTP is bound at residue 62–65 (DVRN).

Belongs to the RapZ-like family.

Its function is as follows. Displays ATPase and GTPase activities. The polypeptide is Nucleotide-binding protein AFE_3021 (Acidithiobacillus ferrooxidans (strain ATCC 23270 / DSM 14882 / CIP 104768 / NCIMB 8455) (Ferrobacillus ferrooxidans (strain ATCC 23270))).